The primary structure comprises 444 residues: Phosphoglucosamine mutase (444 aa).

The active-site Phosphoserine intermediate is Ser102. Mg(2+) is bound by residues Ser102, Asp241, Asp243, and Asp245. Ser102 carries the phosphoserine modification.

This sequence belongs to the phosphohexose mutase family. Requires Mg(2+) as cofactor. Post-translationally, activated by phosphorylation.

The catalysed reaction is alpha-D-glucosamine 1-phosphate = D-glucosamine 6-phosphate. Catalyzes the conversion of glucosamine-6-phosphate to glucosamine-1-phosphate. The chain is Phosphoglucosamine mutase from Pasteurella multocida (strain Pm70).